The chain runs to 215 residues: Ribosomal RNA small subunit methyltransferase G (215 aa).

S-adenosyl-L-methionine is bound by residues Gly-82, Met-87, 133-134 (VE), and Arg-148.

The protein belongs to the methyltransferase superfamily. RNA methyltransferase RsmG family.

It localises to the cytoplasm. The enzyme catalyses guanosine(527) in 16S rRNA + S-adenosyl-L-methionine = N(7)-methylguanosine(527) in 16S rRNA + S-adenosyl-L-homocysteine. Its function is as follows. Specifically methylates the N7 position of guanine in position 527 of 16S rRNA. This chain is Ribosomal RNA small subunit methyltransferase G, found in Stutzerimonas stutzeri (strain A1501) (Pseudomonas stutzeri).